The following is a 459-amino-acid chain: Trigger factor (459 aa).

Residues 166–245 form the PPIase FKBP-type domain; it reads GDFANIDLTA…VNSVKAEELP (80 aa).

It belongs to the FKBP-type PPIase family. Tig subfamily.

The protein resides in the cytoplasm. It carries out the reaction [protein]-peptidylproline (omega=180) = [protein]-peptidylproline (omega=0). In terms of biological role, involved in protein export. Acts as a chaperone by maintaining the newly synthesized protein in an open conformation. Functions as a peptidyl-prolyl cis-trans isomerase. The chain is Trigger factor from Bifidobacterium longum subsp. infantis (strain ATCC 15697 / DSM 20088 / JCM 1222 / NCTC 11817 / S12).